A 148-amino-acid polypeptide reads, in one-letter code: Large ribosomal subunit protein uL15 (148 aa).

The disordered stretch occupies residues 1-61; sequence MKINDLKPAP…GGQMPLQRRV (61 aa).

It belongs to the universal ribosomal protein uL15 family. As to quaternary structure, part of the 50S ribosomal subunit.

Its function is as follows. Binds to the 23S rRNA. This chain is Large ribosomal subunit protein uL15, found in Thermodesulfovibrio yellowstonii (strain ATCC 51303 / DSM 11347 / YP87).